A 594-amino-acid polypeptide reads, in one-letter code: Maternal effect protein oskar (594 aa).

A compositionally biased stretch (low complexity) spans 44–62; sequence QQQPKQQQQQQQHQSQHQH. The tract at residues 44-68 is disordered; that stretch reads QQQPKQQQQQQQHQSQHQHQQQKQK. One can recognise an HTH OST-type domain in the interval 174–243; that stretch reads EYPDIDTEIR…SGKRIFNIKP (70 aa).

In terms of assembly, interacts with smaug (smg). Posterior pole of the oocyte.

In terms of biological role, organizes the germ plasm and directs localization of the posterior determinant nanos. Oskar protein is required to keep oskar RNA and staufen protein at the posterior pole. This is Maternal effect protein oskar (osk) from Drosophila virilis (Fruit fly).